Consider the following 97-residue polypeptide: Co-chaperonin GroES (97 aa).

It belongs to the GroES chaperonin family. Heptamer of 7 subunits arranged in a ring. Interacts with the chaperonin GroEL.

Its subcellular location is the cytoplasm. Functionally, together with the chaperonin GroEL, plays an essential role in assisting protein folding. The GroEL-GroES system forms a nano-cage that allows encapsulation of the non-native substrate proteins and provides a physical environment optimized to promote and accelerate protein folding. GroES binds to the apical surface of the GroEL ring, thereby capping the opening of the GroEL channel. The protein is Co-chaperonin GroES of Proteus mirabilis (strain HI4320).